We begin with the raw amino-acid sequence, 147 residues long: Lysozyme C, tracheal isozyme (147 aa).

An N-terminal signal peptide occupies residues M1–G18. One can recognise a C-type lysozyme domain in the interval K19–V147. Disulfide bonds link C24-C145, C48-C133, C83-C99, and C95-C113. Active-site residues include E53 and D71.

The protein belongs to the glycosyl hydrolase 22 family. As to quaternary structure, monomer. In terms of tissue distribution, trachea.

It catalyses the reaction Hydrolysis of (1-&gt;4)-beta-linkages between N-acetylmuramic acid and N-acetyl-D-glucosamine residues in a peptidoglycan and between N-acetyl-D-glucosamine residues in chitodextrins.. Functionally, lysozymes have primarily a bacteriolytic function; those in tissues and body fluids are associated with the monocyte-macrophage system and enhance the activity of immunoagents. This chain is Lysozyme C, tracheal isozyme, found in Bos taurus (Bovine).